The sequence spans 263 residues: Aminoglycoside 3'-phosphotransferase (263 aa).

Residue aspartate 183 is the Proton acceptor of the active site.

It belongs to the aminoglycoside phosphotransferase family.

It catalyses the reaction kanamycin A + ATP = kanamycin 3'-phosphate + ADP + H(+). Its function is as follows. Resistance to kanamycin and structurally-related aminoglycosides, including amikacin. In Streptomyces ribosidificus, this protein is Aminoglycoside 3'-phosphotransferase (rph).